Consider the following 195-residue polypeptide: Adenylate kinase (195 aa).

11–16 (GAGKGT) serves as a coordination point for ATP. Positions 31 to 60 (STGDIFRAAVRNQTPLGQQVQAYLDSGRLV) are NMP. Residues threonine 32, arginine 37, 58–60 (RLV), 86–89 (GFPR), and glutamine 93 contribute to the AMP site. The tract at residues 127 to 137 (LRAEKESRKDD) is LID. Arginine 128 is a binding site for ATP. AMP contacts are provided by arginine 134 and arginine 145. Glutamine 173 is a binding site for ATP.

The protein belongs to the adenylate kinase family. In terms of assembly, monomer.

The protein localises to the cytoplasm. It catalyses the reaction AMP + ATP = 2 ADP. It functions in the pathway purine metabolism; AMP biosynthesis via salvage pathway; AMP from ADP: step 1/1. Functionally, catalyzes the reversible transfer of the terminal phosphate group between ATP and AMP. Plays an important role in cellular energy homeostasis and in adenine nucleotide metabolism. This chain is Adenylate kinase, found in Cyanothece sp. (strain PCC 7425 / ATCC 29141).